A 266-amino-acid chain; its full sequence is Orcokinin peptides type B (266 aa).

Residues 1–20 (MTAQMFTIALLLSLSAIAAA) form the signal peptide. Propeptides lie at residues 21–46 (GTIK…GAPV), 240–246 (DYDVFPD), and 264–266 (NVE).

It belongs to the orcokinin family.

It is found in the secreted. Myotropic peptides that enhance both the frequency and amplitude of spontaneous hindgut contractions. The chain is Orcokinin peptides type B from Procambarus clarkii (Red swamp crayfish).